A 151-amino-acid chain; its full sequence is Inorganic triphosphatase (151 aa).

The 148-residue stretch at 1 to 148 folds into the CYTH domain; it reads MTEIERKFLV…KRYKNKALAL (148 aa). Tyrosine 27 serves as the catalytic Proton acceptor.

Homodimer.

It catalyses the reaction triphosphate + H2O = phosphate + diphosphate. Its activity is regulated as follows. Activated by magnesium and mangenese ions, and inhibited by calcium, zinc and copper ions. Involved in the hydrolysis of the beta-gamma-phosphoanhydride linkage of triphosphate-containing substrates (inorganic or nucleoside-linked). Catalyzes the hydrolysis of inorganic triphosphate (PPPi). The enzyme has a strong preference for linear PPPi compared with cyclic PPPi (cyclic trimetaphosphate) and to the linear P4. The longer chains polyphosphate are not hydrolyzed. It has only a slight thiamine triphosphatase (ThTPase) activity. Nucleoside triphosphatase activity is negligible in the presence of magnesium, but a small activity is observed in the presence of manganese, in particular with GTP. This chain is Inorganic triphosphatase, found in Nitrosomonas europaea (strain ATCC 19718 / CIP 103999 / KCTC 2705 / NBRC 14298).